The following is a 146-amino-acid chain: Hemoglobin subunit beta (146 aa).

An N-acetylvaline modification is found at valine 1. The Globin domain occupies 2 to 146 (HLTPEEKTAV…VANALAHKYH (145 aa)). At threonine 12 the chain carries Phosphothreonine. At serine 44 the chain carries Phosphoserine. N6-acetyllysine is present on lysine 59. Histidine 63 is a heme b binding site. Lysine 82 carries the N6-acetyllysine modification. Position 92 (histidine 92) interacts with heme b. Residue cysteine 93 is modified to S-nitrosocysteine. Position 144 is an N6-acetyllysine (lysine 144).

Belongs to the globin family. Heterotetramer of two alpha chains and two beta chains. As to expression, red blood cells.

Its function is as follows. Involved in oxygen transport from the lung to the various peripheral tissues. This Mandrillus sphinx (Mandrill) protein is Hemoglobin subunit beta (HBB).